The following is a 589-amino-acid chain: Zinc finger and BTB domain-containing protein 46 (589 aa).

Residues 31-99 form the BTB domain; it reads CDVCVVVEGK…MYSAHLALTS (69 aa). The tract at residues 173-330 is disordered; the sequence is RRTSPANSSG…ASSSDSRGER (158 aa). The segment covering 197–207 has biased composition (basic and acidic residues); the sequence is GKEDQEPKADG. Residue K229 forms a Glycyl lysine isopeptide (Lys-Gly) (interchain with G-Cter in SUMO2) linkage. Residue S234 is modified to Phosphoserine. Positions 305-325 are enriched in polar residues; it reads WPFSSRDSNADLSVTEASSSD. 2 C2H2-type zinc fingers span residues 418–436 and 446–468; these read FKCPYCSFSAMHQCILKRH and YPCEICGKKFTRREHMKRHTLVH. The interval 512-589 is disordered; the sequence is PLDHGGGGGE…GPDKDFAWLS (78 aa). Residues 546–570 are compositionally biased toward acidic residues; the sequence is EELGEDDEGLAPEDALLADDKDEED.

Sumoylated. Desumoylation by DESI1 reverses transcriptional repression activity.

The protein localises to the nucleus. Its function is as follows. Functions as a transcriptional repressor for PRDM1. The sequence is that of Zinc finger and BTB domain-containing protein 46 (ZBTB46) from Homo sapiens (Human).